A 302-amino-acid polypeptide reads, in one-letter code: Gigasin-6 (302 aa).

An N-terminal signal peptide occupies residues 1–22 (MSSRNLLYSSVVLFLVLFYCHG). The chain crosses the membrane as a helical span at residues 75 to 95 (ITTDTLFGLGGISALFANILI).

Component of the organic matrix of calcified shell layers.

The protein localises to the membrane. This Magallana gigas (Pacific oyster) protein is Gigasin-6.